The following is a 340-amino-acid chain: tRNA N6-adenosine threonylcarbamoyltransferase (340 aa).

Positions 109 and 113 each coordinate Fe cation. Substrate is bound by residues 132 to 136, Asp-165, Gly-178, and Asn-277; that span reads AISGA. Fe cation is bound at residue Asp-302.

It belongs to the KAE1 / TsaD family. Requires Fe(2+) as cofactor.

It localises to the cytoplasm. It catalyses the reaction L-threonylcarbamoyladenylate + adenosine(37) in tRNA = N(6)-L-threonylcarbamoyladenosine(37) in tRNA + AMP + H(+). Functionally, required for the formation of a threonylcarbamoyl group on adenosine at position 37 (t(6)A37) in tRNAs that read codons beginning with adenine. Is involved in the transfer of the threonylcarbamoyl moiety of threonylcarbamoyl-AMP (TC-AMP) to the N6 group of A37, together with TsaE and TsaB. TsaD likely plays a direct catalytic role in this reaction. The chain is tRNA N6-adenosine threonylcarbamoyltransferase from Chlamydia muridarum (strain MoPn / Nigg).